The sequence spans 390 residues: MSIASSLTSATLCGASVFPKALACSSEFPINLPSPFESSKICLTSFPASRDLKKNATLNLTRNVGPVRCHAMQAGTRELKKFELSDVIEGKQFDREMLSAIFDVAREMEKIEKSSSQSEILKGYLMATLFYEPSTRTRLSFESAMKRLGGEVLTTENAREFSSAAKGETLEDTIRTVEGYSDIIVMRHFESGAARKAAATANIPVINAGDGPGEHPTQALLDVYTIQSEIGKLDGISVALVGDLANGRTVRSLAYLLAKFKDVKIYFVSPEIVKMKDDIKDYLTSSGVEWEESSDLMEVASKCDVVYQTRIQRERFGERLDLYEAARGKYIVDKDLLGVMQKKAIIMHPLPRLDEITADVDADPRAAYFRQAKNGLFIRMALLKLLLVGW.

A chloroplast-targeting transit peptide spans 1 to 68; it reads MSIASSLTSA…NLTRNVGPVR (68 aa). Carbamoyl phosphate is bound by residues Arg-136 and Thr-137. Positions 136 and 137 each coordinate UMP. L-aspartate is bound at residue Lys-166. The carbamoyl phosphate site is built by Arg-187, His-215, and Gln-218. UMP contacts are provided by Arg-187 and His-215. The UMP site is built by Arg-248 and Arg-310. L-aspartate-binding residues include Arg-248 and Arg-310. Leu-350 and Pro-351 together coordinate carbamoyl phosphate.

It belongs to the aspartate/ornithine carbamoyltransferase superfamily. ATCase family. As to quaternary structure, homotrimer.

Its subcellular location is the plastid. The protein localises to the chloroplast. The enzyme catalyses carbamoyl phosphate + L-aspartate = N-carbamoyl-L-aspartate + phosphate + H(+). It functions in the pathway pyrimidine metabolism; UMP biosynthesis via de novo pathway; (S)-dihydroorotate from bicarbonate: step 2/3. Feedback inhibited by UMP. Functionally, catalyzes the condensation of carbamoyl phosphate and aspartate to form carbamoyl aspartate and inorganic phosphate, the committed step in the de novo pyrimidine nucleotide biosynthesis pathway. The polypeptide is Aspartate carbamoyltransferase, chloroplastic (PYRB) (Arabidopsis thaliana (Mouse-ear cress)).